The chain runs to 350 residues: 26S proteasome non-ATPase regulatory subunit 8 (350 aa).

The interval 1 to 24 is disordered; the sequence is MFIKGRAPRAPPRERRRATRGGLR. Position 106 is a phosphoserine (serine 106). Residues 162–331 form the PCI domain; sequence PSFERYMAQL…QQKPEDTTIP (170 aa). Lysine 297 is covalently cross-linked (Glycyl lysine isopeptide (Lys-Gly) (interchain with G-Cter in SUMO2)).

It belongs to the proteasome subunit S14 family. As to quaternary structure, component of the 19S proteasome regulatory particle complex. The 26S proteasome consists of a 20S core particle (CP) and two 19S regulatory subunits (RP). The regulatory particle is made of a lid composed of 9 subunits including PSMD8, a base containing 6 ATPases and few additional components. Interacts with DDI2. Interacts with TASOR.

In terms of biological role, component of the 26S proteasome, a multiprotein complex involved in the ATP-dependent degradation of ubiquitinated proteins. This complex plays a key role in the maintenance of protein homeostasis by removing misfolded or damaged proteins, which could impair cellular functions, and by removing proteins whose functions are no longer required. Therefore, the proteasome participates in numerous cellular processes, including cell cycle progression, apoptosis, or DNA damage repair. This Homo sapiens (Human) protein is 26S proteasome non-ATPase regulatory subunit 8 (PSMD8).